We begin with the raw amino-acid sequence, 332 residues long: Ferredoxin--NADP reductase 2 (332 aa).

FAD is bound by residues Glu-37, Gln-45, Tyr-50, Val-90, Phe-124, Asp-285, and Thr-326.

The protein belongs to the ferredoxin--NADP reductase type 2 family. As to quaternary structure, homodimer. FAD is required as a cofactor.

It catalyses the reaction 2 reduced [2Fe-2S]-[ferredoxin] + NADP(+) + H(+) = 2 oxidized [2Fe-2S]-[ferredoxin] + NADPH. The polypeptide is Ferredoxin--NADP reductase 2 (Bacillus licheniformis (strain ATCC 14580 / DSM 13 / JCM 2505 / CCUG 7422 / NBRC 12200 / NCIMB 9375 / NCTC 10341 / NRRL NRS-1264 / Gibson 46)).